Consider the following 545-residue polypeptide: CTP synthase (545 aa).

The tract at residues 1–266 (MATNYIFVTG…DDFVCERFRL (266 aa)) is amidoligase domain. Residue Ser14 participates in CTP binding. A UTP-binding site is contributed by Ser14. ATP is bound by residues 15-20 (SLGKGI) and Asp72. Positions 72 and 140 each coordinate Mg(2+). CTP is bound by residues 147 to 149 (DIE), 187 to 192 (KTKPTQ), and Lys223. Residues 187-192 (KTKPTQ) and Lys223 each bind UTP. 239-241 (KDV) contributes to the ATP binding site. One can recognise a Glutamine amidotransferase type-1 domain in the interval 291 to 542 (TIGMVGKYTE…VKAAYENHKK (252 aa)). Gly352 lines the L-glutamine pocket. Cys379 functions as the Nucleophile; for glutamine hydrolysis in the catalytic mechanism. Residues 380–383 (LGMQ), Glu403, and Arg470 each bind L-glutamine. Residues His515 and Glu517 contribute to the active site.

The protein belongs to the CTP synthase family. As to quaternary structure, homotetramer.

The catalysed reaction is UTP + L-glutamine + ATP + H2O = CTP + L-glutamate + ADP + phosphate + 2 H(+). It carries out the reaction L-glutamine + H2O = L-glutamate + NH4(+). It catalyses the reaction UTP + NH4(+) + ATP = CTP + ADP + phosphate + 2 H(+). It participates in pyrimidine metabolism; CTP biosynthesis via de novo pathway; CTP from UDP: step 2/2. With respect to regulation, allosterically activated by GTP, when glutamine is the substrate; GTP has no effect on the reaction when ammonia is the substrate. The allosteric effector GTP functions by stabilizing the protein conformation that binds the tetrahedral intermediate(s) formed during glutamine hydrolysis. Inhibited by the product CTP, via allosteric rather than competitive inhibition. In terms of biological role, catalyzes the ATP-dependent amination of UTP to CTP with either L-glutamine or ammonia as the source of nitrogen. Regulates intracellular CTP levels through interactions with the four ribonucleotide triphosphates. This Haemophilus influenzae (strain PittGG) protein is CTP synthase.